The primary structure comprises 439 residues: Methionine aminopeptidase 2-2 (439 aa).

A disordered region spans residues Met1–Pro90. A compositionally biased stretch (basic and acidic residues) spans Glu10 to Pro23. Residues Asp35–Asp45 are compositionally biased toward acidic residues. The span at Ala54–Asn68 shows a compositional bias: basic residues. Substrate is bound at residue His192. Positions 212, 223, and 292 each coordinate a divalent metal cation. His300 contacts substrate. Residues Glu325 and Glu420 each contribute to the a divalent metal cation site.

The protein belongs to the peptidase M24A family. Methionine aminopeptidase eukaryotic type 2 subfamily. Co(2+) serves as cofactor. Requires Zn(2+) as cofactor. Mn(2+) is required as a cofactor. The cofactor is Fe(2+).

Its subcellular location is the cytoplasm. The catalysed reaction is Release of N-terminal amino acids, preferentially methionine, from peptides and arylamides.. Its function is as follows. Cotranslationally removes the N-terminal methionine from nascent proteins. The N-terminal methionine is often cleaved when the second residue in the primary sequence is small and uncharged (Met-Ala-, Cys, Gly, Pro, Ser, Thr, or Val). The sequence is that of Methionine aminopeptidase 2-2 from Chaetomium globosum (strain ATCC 6205 / CBS 148.51 / DSM 1962 / NBRC 6347 / NRRL 1970) (Soil fungus).